Reading from the N-terminus, the 225-residue chain is MDLRAGDSWGMLACLCTVLWHLPAVPALNRTGDPGPGPSIQKTYDLTRYLEHQLRSLAGTYLNYLGPPFNEPDFNPPRLGAETLPRATVDLEVWRSLNDKLRLTQNYEAYSHLLCYLRGLNRQAATAELRRSLAHFCTSLQGLLGSIAGVMAALGYPLPQPLPGTEPTWTPGPAHSDFLQKMDDFWLLKELQTWLWRSAKDFNRLKKKMQPPAAAVTLHLGAHGF.

Positions 1 to 27 (MDLRAGDSWGMLACLCTVLWHLPAVPA) are cleaved as a signal peptide. An N-linked (GlcNAc...) asparagine glycan is attached at Asn29.

This sequence belongs to the IL-6 superfamily. In terms of assembly, forms a heteromeric complex with cardiotrophin-like cytokine CRLF1/CLF-1; the CRLF1-CLCF1 complex is a ligand for the ciliary neurotrophic factor receptor/CNTFR. The CRLF1-CLCF1 heterodimer binds SORL1 (via N-terminal ectodomain); within this complex, the interaction is mediated predominantly by the CRLF1 moiety. The tripartite signaling complex formed by CRLF1, CLCF1 and CNTFR also binds SORL1. As to expression, expressed predominantly in lymph nodes, spleen, peripheral blood lymphocytes, bone marrow, and fetal liver.

It is found in the secreted. Its function is as follows. In complex with CRLF1, forms a heterodimeric neurotropic cytokine that plays a crucial role during neuronal development. Also stimulates B-cells. Binds to and activates the ILST/gp130 receptor. In Homo sapiens (Human), this protein is Cardiotrophin-like cytokine factor 1 (CLCF1).